Consider the following 203-residue polypeptide: Histidine biosynthesis bifunctional protein HisIE (203 aa).

Residues 1–114 (MLTEQQRREL…FGDTAHQWLF (114 aa)) are phosphoribosyl-AMP cyclohydrolase. The tract at residues 115 to 203 (LYQLEQLLAE…VIENLRKRHQ (89 aa)) is phosphoribosyl-ATP pyrophosphohydrolase.

In the N-terminal section; belongs to the PRA-CH family. The protein in the C-terminal section; belongs to the PRA-PH family.

It localises to the cytoplasm. The catalysed reaction is 1-(5-phospho-beta-D-ribosyl)-ATP + H2O = 1-(5-phospho-beta-D-ribosyl)-5'-AMP + diphosphate + H(+). It catalyses the reaction 1-(5-phospho-beta-D-ribosyl)-5'-AMP + H2O = 1-(5-phospho-beta-D-ribosyl)-5-[(5-phospho-beta-D-ribosylamino)methylideneamino]imidazole-4-carboxamide. It participates in amino-acid biosynthesis; L-histidine biosynthesis; L-histidine from 5-phospho-alpha-D-ribose 1-diphosphate: step 2/9. Its pathway is amino-acid biosynthesis; L-histidine biosynthesis; L-histidine from 5-phospho-alpha-D-ribose 1-diphosphate: step 3/9. The polypeptide is Histidine biosynthesis bifunctional protein HisIE (Escherichia coli O6:H1 (strain CFT073 / ATCC 700928 / UPEC)).